A 1027-amino-acid chain; its full sequence is Cysteine-rich motor neuron 1 protein (1027 aa).

Positions 1-28 (MASSRMYLLVKCMLILQLMVLIAKNSRA) are cleaved as a signal peptide. In terms of domain architecture, IGFBP N-terminal spans 29 to 106 (LICLPCDKSK…QYEVGNCEDE (78 aa)). The Extracellular segment spans residues 29–931 (LICLPCDKSK…PLPSEDAGLH (903 aa)). 4 disulfides stabilise this stretch: Cys-31/Cys-54, Cys-34/Cys-56, Cys-39/Cys-57, and Cys-45/Cys-60. An N-linked (GlcNAc...) asparagine glycan is attached at Asn-65. 2 disulfide bridges follow: Cys-68-Cys-84 and Cys-78-Cys-103. The short motif at 308 to 310 (RGD) is the Cell attachment site element. Asn-324 carries N-linked (GlcNAc...) asparagine glycosylation. 2 consecutive VWFC domains span residues 328–385 (PACT…PVCE) and 395–451 (AGCY…PVCE). 4 consecutive Antistasin-like domains span residues 463–492 (CGSL…TCAC), 499–526 (CGGL…VCQC), 533–558 (CKAV…TCRC), and 561–586 (CPEL…ICQC). Asn-468 carries an N-linked (GlcNAc...) asparagine glycan. VWFC domains follow at residues 601–658 (GSCL…PTCP) and 672–730 (SVCL…PHCP). An N-linked (GlcNAc...) asparagine glycan is attached at Asn-741. VWFC domains are found at residues 746–804 (SYCR…PYCL) and 810–867 (AVCH…PMCP). The segment at 877–897 (IEKTDQRGDKSRHQPAWPTHS) is disordered. Residues 878–888 (EKTDQRGDKSR) show a composition bias toward basic and acidic residues. The Cell attachment site signature appears at 883-885 (RGD). A helical transmembrane segment spans residues 932–952 (WAWVALPVLMMMLTLAALLLV). Residues 953 to 1027 (NQRKQWIPVP…LQADNFYQTA (75 aa)) lie on the Cytoplasmic side of the membrane.

It is found in the membrane. May play a role in CNS development by interacting with growth factors implicated in motor neuron differentiation and survival. In Danio rerio (Zebrafish), this protein is Cysteine-rich motor neuron 1 protein (crim1).